A 333-amino-acid polypeptide reads, in one-letter code: MKSATPDDLPRTGVEPDLSRSASECFESLWNGAIGMRSLPLTIAGARVLDAGVTCSGSLEAGLGLARLCLGDLANVRYVPATADDLVGLSVTIQTDHPVLSCLGGQYAGWPVSVADYFAMASGPMRCLRGKEAMLEQLHLSRQATDDDFAVGVLESDTLPGEDVIEAMADECGVDPSRLCLAVAPSTSIAGSAQVVSRSVETALHKLHALEFDVTRVVSAHGDAPLPPPAKKGDTIGGIGRTNDAMLYGARVTLWVDAEDDAIDSVASKVPSQSSDDHGRPFAEIFKQYEYDFYQVDPMLFSPAVVTIHSLQSGRTWRHGQISIDVMRKSFGL.

This sequence belongs to the MCH family.

The protein resides in the cytoplasm. It catalyses the reaction 5,10-methenyl-5,6,7,8-tetrahydromethanopterin + H2O = N(5)-formyl-5,6,7,8-tetrahydromethanopterin + H(+). The protein operates within one-carbon metabolism; formaldehyde degradation; formate from formaldehyde (H(4)MPT route): step 3/5. In terms of biological role, catalyzes the hydrolysis of methenyl-H(4)MPT(+) to 5-formyl-H(4)MPT. This chain is Methenyltetrahydromethanopterin cyclohydrolase (mch), found in Rhodopirellula baltica (strain DSM 10527 / NCIMB 13988 / SH1).